The chain runs to 156 residues: Small ribosomal subunit protein uS7 (156 aa).

This sequence belongs to the universal ribosomal protein uS7 family. In terms of assembly, part of the 30S ribosomal subunit. Contacts proteins S9 and S11.

In terms of biological role, one of the primary rRNA binding proteins, it binds directly to 16S rRNA where it nucleates assembly of the head domain of the 30S subunit. Is located at the subunit interface close to the decoding center, probably blocks exit of the E-site tRNA. In Syntrophotalea carbinolica (strain DSM 2380 / NBRC 103641 / GraBd1) (Pelobacter carbinolicus), this protein is Small ribosomal subunit protein uS7.